We begin with the raw amino-acid sequence, 579 residues long: Protein inscuteable homolog (579 aa).

The tract at residues 74–89 is important for interaction with GPSM2; it reads SVQRWMEDLKLMTECE. The PDZ-binding signature appears at 576-579; it reads ESFV.

Interacts with ALS2CR19/PAR3B and F2RL2/PAR3. Interacts with GPSM1/AGS3 and GPSM2/LGN (via TPR repeat region). Identified in a complex with GPSM2 and F2RL2. In terms of tissue distribution, isoform 1 is expressed in various tissues with stronger expression in liver, kidney and small intestine. Isoform 2 is abundantly expressed in small intestine and to a lower extent in lung and pancreas.

It is found in the cytoplasm. The protein resides in the cell cortex. Functionally, may function as an adapter linking the Par3 complex to the GPSM1/GPSM2 complex. Involved in spindle orientation during mitosis. May regulate cell proliferation and differentiation in the developing nervous system. May play a role in the asymmetric division of fibroblasts and participate in the process of stratification of the squamous epithelium. The chain is Protein inscuteable homolog (INSC) from Homo sapiens (Human).